We begin with the raw amino-acid sequence, 814 residues long: Telomere repeats-binding bouquet formation protein 1 (814 aa).

ARM repeat units follow at residues 93 to 136 (EMFR…KTSR) and 327 to 368 (GGLP…GMST). Disordered stretches follow at residues 461-521 (DQDS…ELKR), 551-584 (STPTEGNRDTQGPDIFRHPDPVKRNQREPSLSDD), and 653-753 (FRRS…KRQN). The stretch at 488 to 512 (EKSKKRKHKQKRENERSDNQETRRE) forms a coiled coil. Composition is skewed to basic and acidic residues over residues 499–521 (RENERSDNQETRREGVNKRELKR), 565–577 (IFRHPDPVKRNQR), and 679–688 (EHSTSAQEHK). Residues 689–699 (QKSKREKHKLS) show a composition bias toward basic residues. Basic and acidic residues predominate over residues 714-741 (RPRETYSPDVKQWTDHRHLKKSSEDARS). In terms of domain architecture, Myb-like spans 746–799 (GRHRKRQNWSDKELCYLTKGVKRFGHSWNTILWKYPFHPGRTNVDLAKKFYHMQ).

This sequence belongs to the TERB1 family. As to quaternary structure, component of the MAJIN-TERB1-TERB2 complex.

It localises to the chromosome. The protein localises to the telomere. The protein resides in the nucleus inner membrane. In terms of biological role, meiosis-specific telomere-associated protein involved in meiotic telomere attachment to the nucleus inner membrane, a crucial step for homologous pairing and synapsis. Component of the MAJIN-TERB1-TERB2 complex, which promotes telomere cap exchange by mediating attachment of telomeric DNA to the inner nuclear membrane and replacement of the protective cap of telomeric chromosomes: in early meiosis, the MAJIN-TERB1-TERB2 complex associates with telomeric DNA and the shelterin/telosome complex. During prophase, the complex matures and promotes release of the shelterin/telosome complex from telomeric DNA. In the MAJIN-TERB1-TERB2 complex, TERB1 probably mediates association with the shelterin/telosome complex. The sequence is that of Telomere repeats-binding bouquet formation protein 1 (ccdc79) from Danio rerio (Zebrafish).